The following is a 293-amino-acid chain: MPTFGRLLTAMVTPMTPDGAVDYQRAGELAKHLVAAGSEGLVVSGTTGESPTLSHEEKLRLFETVVDAVGGQVSVIAGTGSNNTAESIRFSREAARTGVHGLLLVTPYYNKPPQEGLYRHFRAVAEAVDLPCILYNVPSRTSVNMLPATTLRLARDVPNIVGIKECADVGQLADILSGAPEGFRVWSGDDANLLPYLTVGAYGIISVASHVVGPQMRELIDAFLAGDTARAAAWHRRLLPVFRGLFAVTNPILVKAALRLTGFPVGPVRLPLVDATEEQEEALREVLAEAGVL.

Thr47 is a binding site for pyruvate. Tyr135 acts as the Proton donor/acceptor in catalysis. Residue Lys164 is the Schiff-base intermediate with substrate of the active site. Residue Ile205 participates in pyruvate binding.

This sequence belongs to the DapA family. In terms of assembly, homotetramer; dimer of dimers.

The protein localises to the cytoplasm. It catalyses the reaction L-aspartate 4-semialdehyde + pyruvate = (2S,4S)-4-hydroxy-2,3,4,5-tetrahydrodipicolinate + H2O + H(+). Its pathway is amino-acid biosynthesis; L-lysine biosynthesis via DAP pathway; (S)-tetrahydrodipicolinate from L-aspartate: step 3/4. Catalyzes the condensation of (S)-aspartate-beta-semialdehyde [(S)-ASA] and pyruvate to 4-hydroxy-tetrahydrodipicolinate (HTPA). This Symbiobacterium thermophilum (strain DSM 24528 / JCM 14929 / IAM 14863 / T) protein is 4-hydroxy-tetrahydrodipicolinate synthase.